A 1125-amino-acid polypeptide reads, in one-letter code: Speract receptor (1125 aa).

An N-terminal signal peptide occupies residues 1 to 21 (MAHARHLFLFMVAFTITMVIA). Over 22-510 (RLDFNPTIIN…GELCTNWALY (489 aa)) the chain is Extracellular. N-linked (GlcNAc...) asparagine glycosylation is found at N185 and N409. Residues 511–531 (LGASIPTFLIIFGGLIGFFIY) traverse the membrane as a helical segment. Residues 532-1125 (RKRAYEAALD…AANRVIPDDV (594 aa)) lie on the Cytoplasmic side of the membrane. The 269-residue stretch at 571–839 (MSAISVISNA…PNIMAVRTML (269 aa)) folds into the Protein kinase domain. Residues 914-1044 (SIFFSDIVGF…DTVNTASRME (131 aa)) form the Guanylate cyclase domain.

This sequence belongs to the adenylyl cyclase class-4/guanylyl cyclase family.

It is found in the membrane. It catalyses the reaction GTP = 3',5'-cyclic GMP + diphosphate. Implicated as a cell-surface receptor on spermatozoa for 'speract' a chemotactic peptide, and on various other cells as a receptor for atrial natriuretic peptide. The chain is Speract receptor from Strongylocentrotus purpuratus (Purple sea urchin).